Here is a 129-residue protein sequence, read N- to C-terminus: Small ribosomal subunit protein uS11 (129 aa).

Belongs to the universal ribosomal protein uS11 family. Part of the 30S ribosomal subunit. Interacts with proteins S7 and S18. Binds to IF-3.

In terms of biological role, located on the platform of the 30S subunit, it bridges several disparate RNA helices of the 16S rRNA. Forms part of the Shine-Dalgarno cleft in the 70S ribosome. The protein is Small ribosomal subunit protein uS11 of Stenotrophomonas maltophilia (strain R551-3).